The sequence spans 100 residues: NADH-quinone oxidoreductase subunit K (100 aa).

Transmembrane regions (helical) follow at residues 4 to 24 (LQHG…GLVI), 28 to 48 (LLFM…AFVV), and 60 to 80 (IMYI…LALL).

Belongs to the complex I subunit 4L family. As to quaternary structure, NDH-1 is composed of 13 different subunits. Subunits NuoA, H, J, K, L, M, N constitute the membrane sector of the complex.

It localises to the cell inner membrane. The catalysed reaction is a quinone + NADH + 5 H(+)(in) = a quinol + NAD(+) + 4 H(+)(out). Functionally, NDH-1 shuttles electrons from NADH, via FMN and iron-sulfur (Fe-S) centers, to quinones in the respiratory chain. The immediate electron acceptor for the enzyme in this species is believed to be ubiquinone. Couples the redox reaction to proton translocation (for every two electrons transferred, four hydrogen ions are translocated across the cytoplasmic membrane), and thus conserves the redox energy in a proton gradient. The sequence is that of NADH-quinone oxidoreductase subunit K from Cronobacter sakazakii (strain ATCC BAA-894) (Enterobacter sakazakii).